A 159-amino-acid chain; its full sequence is 2-C-methyl-D-erythritol 2,4-cyclodiphosphate synthase (159 aa).

Positions 10 and 12 each coordinate a divalent metal cation. 4-CDP-2-C-methyl-D-erythritol 2-phosphate contacts are provided by residues Asp10–His12 and His36–Ser37. His44 is a binding site for a divalent metal cation. 4-CDP-2-C-methyl-D-erythritol 2-phosphate is bound by residues Asp58 to Gly60, Thr134 to Glu137, Phe141, and Arg144.

Belongs to the IspF family. Homotrimer. The cofactor is a divalent metal cation.

The catalysed reaction is 4-CDP-2-C-methyl-D-erythritol 2-phosphate = 2-C-methyl-D-erythritol 2,4-cyclic diphosphate + CMP. It participates in isoprenoid biosynthesis; isopentenyl diphosphate biosynthesis via DXP pathway; isopentenyl diphosphate from 1-deoxy-D-xylulose 5-phosphate: step 4/6. Functionally, involved in the biosynthesis of isopentenyl diphosphate (IPP) and dimethylallyl diphosphate (DMAPP), two major building blocks of isoprenoid compounds. Catalyzes the conversion of 4-diphosphocytidyl-2-C-methyl-D-erythritol 2-phosphate (CDP-ME2P) to 2-C-methyl-D-erythritol 2,4-cyclodiphosphate (ME-CPP) with a corresponding release of cytidine 5-monophosphate (CMP). In Cereibacter sphaeroides (strain ATCC 17029 / ATH 2.4.9) (Rhodobacter sphaeroides), this protein is 2-C-methyl-D-erythritol 2,4-cyclodiphosphate synthase.